The following is a 315-amino-acid chain: MAPPKALAFGLLLAVVTATLAAAQKDCVCNNYKLTSRCYENENGECQCTSYGTQNTVICSKLASKCLVMKAEMTHSKSGRRMKPEGAIQNNDGLYDPECDEQGLFKAKQCNGTATCWCVNTAGVRRTDKDTEITCSERVRTYWIIIELKHKERAQPYNFESLHTALQDTFASRYMLNPKFIKSIMYENNVITIDLMQNSSQKTQDDVDIADVAYYFEKDVKGESLFHSSKSMDLRVNGELLDLDPGQTLIYYVDEKAPEFSMQGLTAGIIAVIVVVVLAVIAGIVVLVISTRKRSAKYEKAEIKEMGEIHRELNA.

The N-terminal stretch at 1-23 (MAPPKALAFGLLLAVVTATLAAA) is a signal peptide. Over 24–266 (QKDCVCNNYK…APEFSMQGLT (243 aa)) the chain is Extracellular. 6 disulfide bridges follow: C27-C46, C29-C59, C38-C48, C66-C99, C110-C116, and C118-C135. The region spanning 63 to 135 (ASKCLVMKAE…RTDKDTEITC (73 aa)) is the Thyroglobulin type-1 domain. N-linked (GlcNAc...) asparagine glycosylation occurs at N111. N198 carries N-linked (GlcNAc...) asparagine glycosylation. A helical membrane pass occupies residues 267 to 289 (AGIIAVIVVVVLAVIAGIVVLVI). Residues 290–315 (STRKRSAKYEKAEIKEMGEIHRELNA) are Cytoplasmic-facing.

This sequence belongs to the EPCAM family. In terms of assembly, monomer. Interacts with phosphorylated CLDN7. Post-translationally, glycosylation at Asn-198 is crucial for protein stability.

It localises to the lateral cell membrane. The protein resides in the cell junction. Its subcellular location is the tight junction. Functionally, may act as a physical homophilic interaction molecule between intestinal epithelial cells (IECs) and intraepithelial lymphocytes (IELs) at the mucosal epithelium for providing immunological barrier as a first line of defense against mucosal infection. Plays a role in embryonic stem cells proliferation and differentiation. Up-regulates the expression of FABP5, MYC and cyclins A and E. The protein is Epithelial cell adhesion molecule (Epcam) of Rattus norvegicus (Rat).